The chain runs to 422 residues: Probable protein phosphatase 2C 43 (422 aa).

The PPM-type phosphatase domain occupies 117 to 393 (SSGSYADKGD…DNVTVVVICF (277 aa)). Mn(2+)-binding residues include D163, G164, D341, and D384.

It belongs to the PP2C family. It depends on Mg(2+) as a cofactor. Mn(2+) is required as a cofactor.

The enzyme catalyses O-phospho-L-seryl-[protein] + H2O = L-seryl-[protein] + phosphate. It carries out the reaction O-phospho-L-threonyl-[protein] + H2O = L-threonyl-[protein] + phosphate. This Arabidopsis thaliana (Mouse-ear cress) protein is Probable protein phosphatase 2C 43.